The following is a 346-amino-acid chain: MAVNSAAIRWLGDHLQLLDQRCLPTETLWLDICDSQQAADAIRNMVVRGAPAIGITAAYGLALEAQIMGNDASWVTLQNAVATLADSRPTAVNLFWALERLQRYAGDLQGKALAQALAEDAEAIHREDLAANQAMGEFGADLLPSGATVYTHCNTGALATGGHGTALGIIRSAWARNQLTGVFAGETRPWLQGSRLTSWELLNDGIPVTLVADSCAGQLMQQGKIQAVIVGADRITANGDTANKIGTYNLAVLAQHHNIPFIVAAPVSTLDPALPNGSHIVIEERDANEVRNVQGKSLAPEHCPVYNPAFDITPAQLITAIVTERGVVHRPDTAKINSHLAQTKES.

Residues 48-50, Arg-88, and Gln-192 each bind substrate; that span reads RGA. The active-site Proton donor is Asp-233. 243-244 lines the substrate pocket; the sequence is NK.

The protein belongs to the eIF-2B alpha/beta/delta subunits family. MtnA subfamily.

It catalyses the reaction 5-(methylsulfanyl)-alpha-D-ribose 1-phosphate = 5-(methylsulfanyl)-D-ribulose 1-phosphate. It participates in amino-acid biosynthesis; L-methionine biosynthesis via salvage pathway; L-methionine from S-methyl-5-thio-alpha-D-ribose 1-phosphate: step 1/6. Functionally, catalyzes the interconversion of methylthioribose-1-phosphate (MTR-1-P) into methylthioribulose-1-phosphate (MTRu-1-P). This Alcanivorax borkumensis (strain ATCC 700651 / DSM 11573 / NCIMB 13689 / SK2) protein is Methylthioribose-1-phosphate isomerase.